Here is a 206-residue protein sequence, read N- to C-terminus: Holliday junction branch migration complex subunit RuvA (206 aa).

The tract at residues 1–63 is domain I; that stretch reads MISSLRGDVI…DDAHTLYAFS (63 aa). Residues 64 to 142 are domain II; the sequence is TSEQRETFGI…ALEATSGQAT (79 aa). The flexible linker stretch occupies residues 143–150; the sequence is IGDIAATG. The domain III stretch occupies residues 151–206; it reads NDTALQSQVVEALVGLGFTEAKAATAVKKILEEQNGTTDPSSVLREALQRLSGQKR.

The protein belongs to the RuvA family. In terms of assembly, homotetramer. Forms an RuvA(8)-RuvB(12)-Holliday junction (HJ) complex. HJ DNA is sandwiched between 2 RuvA tetramers; dsDNA enters through RuvA and exits via RuvB. An RuvB hexamer assembles on each DNA strand where it exits the tetramer. Each RuvB hexamer is contacted by two RuvA subunits (via domain III) on 2 adjacent RuvB subunits; this complex drives branch migration. In the full resolvosome a probable DNA-RuvA(4)-RuvB(12)-RuvC(2) complex forms which resolves the HJ.

It is found in the cytoplasm. Its function is as follows. The RuvA-RuvB-RuvC complex processes Holliday junction (HJ) DNA during genetic recombination and DNA repair, while the RuvA-RuvB complex plays an important role in the rescue of blocked DNA replication forks via replication fork reversal (RFR). RuvA specifically binds to HJ cruciform DNA, conferring on it an open structure. The RuvB hexamer acts as an ATP-dependent pump, pulling dsDNA into and through the RuvAB complex. HJ branch migration allows RuvC to scan DNA until it finds its consensus sequence, where it cleaves and resolves the cruciform DNA. In Corynebacterium urealyticum (strain ATCC 43042 / DSM 7109), this protein is Holliday junction branch migration complex subunit RuvA.